The primary structure comprises 465 residues: CCA-adding enzyme (465 aa).

The ATP site is built by Ser-63 and Lys-66. CTP-binding residues include Ser-63 and Lys-66. Mg(2+)-binding residues include Glu-75, Asp-77, and Asp-127. 3 residues coordinate ATP: His-149, Lys-171, and Tyr-180. The CTP site is built by His-149, Lys-171, and Tyr-180.

Belongs to the tRNA nucleotidyltransferase/poly(A) polymerase family. Archaeal CCA-adding enzyme subfamily. Homodimer. Mg(2+) is required as a cofactor.

The enzyme catalyses a tRNA precursor + 2 CTP + ATP = a tRNA with a 3' CCA end + 3 diphosphate. The catalysed reaction is a tRNA with a 3' CCA end + 2 CTP + ATP = a tRNA with a 3' CCACCA end + 3 diphosphate. Catalyzes the addition and repair of the essential 3'-terminal CCA sequence in tRNAs without using a nucleic acid template. Adds these three nucleotides in the order of C, C, and A to the tRNA nucleotide-73, using CTP and ATP as substrates and producing inorganic pyrophosphate. tRNA 3'-terminal CCA addition is required both for tRNA processing and repair. Also involved in tRNA surveillance by mediating tandem CCA addition to generate a CCACCA at the 3' terminus of unstable tRNAs. While stable tRNAs receive only 3'-terminal CCA, unstable tRNAs are marked with CCACCA and rapidly degraded. In Aeropyrum pernix (strain ATCC 700893 / DSM 11879 / JCM 9820 / NBRC 100138 / K1), this protein is CCA-adding enzyme.